Here is a 412-residue protein sequence, read N- to C-terminus: L-threonine:uridine-5'-aldehyde transaldolase (412 aa).

The residue at position 229 (Lys229) is an N6-(pyridoxal phosphate)lysine.

It belongs to the SHMT family. Pyridoxal 5'-phosphate is required as a cofactor.

The catalysed reaction is uridine-5'-aldehyde + L-threonine = (5'S,6'S)-C-glycyluridine + acetaldehyde. It functions in the pathway antibiotic biosynthesis. Its function is as follows. Transaldolase involved in the biosynthesis of the capuramycin-type nucleoside antibiotic A-102395. Catalyzes the condensation of L-threonine and uridine-5'-aldehyde to form 5'-C-glycyluridine (GlyU). The polypeptide is L-threonine:uridine-5'-aldehyde transaldolase (Amycolatopsis sp).